Here is a 696-residue protein sequence, read N- to C-terminus: D-(-)-3-hydroxybutyrate oligomer hydrolase (696 aa).

A signal peptide spans 1-26; the sequence is MTKLGWGRRVVWGAALAAVAMLGACN. Ser-309 functions as the Charge relay system in the catalytic mechanism.

This sequence belongs to the D-(-)-3-hydroxybutyrate oligomer hydrolase family.

It localises to the secreted. The catalysed reaction is (3R)-hydroxybutanoate dimer + H2O = 2 (R)-3-hydroxybutanoate + H(+). The protein operates within lipid metabolism; butanoate metabolism. In terms of biological role, participates in the degradation of poly-3-hydroxybutyrate (PHB). It works downstream of poly(3-hydroxybutyrate) depolymerase, hydrolyzing D(-)-3-hydroxybutyrate oligomers of various length (3HB-oligomers) into 3HB-monomers. This is D-(-)-3-hydroxybutyrate oligomer hydrolase from Burkholderia cenocepacia (strain HI2424).